A 162-amino-acid chain; its full sequence is Probable chemoreceptor glutamine deamidase CheD 2 (162 aa).

The protein belongs to the CheD family.

The enzyme catalyses L-glutaminyl-[protein] + H2O = L-glutamyl-[protein] + NH4(+). In terms of biological role, probably deamidates glutamine residues to glutamate on methyl-accepting chemotaxis receptors (MCPs), playing an important role in chemotaxis. In Geobacter metallireducens (strain ATCC 53774 / DSM 7210 / GS-15), this protein is Probable chemoreceptor glutamine deamidase CheD 2.